A 162-amino-acid chain; its full sequence is uncharacterized protein (162 aa).

Residues 6-78 (LDDLDRNILR…ALIVLEVGKP (73 aa)) enclose the HTH asnC-type domain. The H-T-H motif DNA-binding region spans 25–44 (ISELSEQLKKPESTIHFRIK).

This is an uncharacterized protein from Pyrococcus furiosus (strain ATCC 43587 / DSM 3638 / JCM 8422 / Vc1).